The primary structure comprises 345 residues: tRNA N6-adenosine threonylcarbamoyltransferase (345 aa).

H111 and H115 together coordinate Fe cation. Substrate-binding positions include 134-138 (LVSGG), D167, G180, and N276. D304 is a Fe cation binding site.

It belongs to the KAE1 / TsaD family. Fe(2+) is required as a cofactor.

It is found in the cytoplasm. It carries out the reaction L-threonylcarbamoyladenylate + adenosine(37) in tRNA = N(6)-L-threonylcarbamoyladenosine(37) in tRNA + AMP + H(+). Required for the formation of a threonylcarbamoyl group on adenosine at position 37 (t(6)A37) in tRNAs that read codons beginning with adenine. Is involved in the transfer of the threonylcarbamoyl moiety of threonylcarbamoyl-AMP (TC-AMP) to the N6 group of A37, together with TsaE and TsaB. TsaD likely plays a direct catalytic role in this reaction. The chain is tRNA N6-adenosine threonylcarbamoyltransferase from Bordetella avium (strain 197N).